The chain runs to 48 residues: Large ribosomal subunit protein eL40 (48 aa).

The protein belongs to the eukaryotic ribosomal protein eL40 family.

This is Large ribosomal subunit protein eL40 from Methanoculleus marisnigri (strain ATCC 35101 / DSM 1498 / JR1).